The following is a 284-amino-acid chain: Bifunctional protein FolD (284 aa).

NADP(+) contacts are provided by residues 166–168 and Ile232; that span reads GAS.

Belongs to the tetrahydrofolate dehydrogenase/cyclohydrolase family. As to quaternary structure, homodimer.

It carries out the reaction (6R)-5,10-methylene-5,6,7,8-tetrahydrofolate + NADP(+) = (6R)-5,10-methenyltetrahydrofolate + NADPH. The enzyme catalyses (6R)-5,10-methenyltetrahydrofolate + H2O = (6R)-10-formyltetrahydrofolate + H(+). It participates in one-carbon metabolism; tetrahydrofolate interconversion. Its function is as follows. Catalyzes the oxidation of 5,10-methylenetetrahydrofolate to 5,10-methenyltetrahydrofolate and then the hydrolysis of 5,10-methenyltetrahydrofolate to 10-formyltetrahydrofolate. In Shewanella baltica (strain OS195), this protein is Bifunctional protein FolD.